Reading from the N-terminus, the 309-residue chain is Potassium channel subfamily K member 16 (309 aa).

Residues 1-13 lie on the Cytoplasmic side of the membrane; it reads MPSAGLCSCWGGR. Residues 14–34 form a helical membrane-spanning segment; it reads VLPLLLAYVCYLLLGATIFQL. The pore-forming intramembrane region spans 98-116; sequence SFFFAGTVVTTIGYGNLAP. Residues T108, I109, G110, and Y111 each coordinate K(+). Positions 108 to 113 are selectivity filter 1; the sequence is TIGYGN. The helical transmembrane segment at 120-140 threads the bilayer; the sequence is AGQVFCVFYALLGIPLNVIFL. The Cytoplasmic segment spans residues 141 to 165; the sequence is NHLGTGLRAHLAAIERWEDRPRRSQ. The helical transmembrane segment at 166-186 threads the bilayer; sequence VLQVLGLALFLTLGTLVILIF. Positions 202-221 form an intramembrane region, pore-forming; that stretch reads GFYFAFITLSTIGFGDYVVG. Positions 212, 213, 214, and 215 each coordinate K(+). Positions 212-217 are selectivity filter 2; the sequence is TIGFGD. Residues 238–258 form a helical membrane-spanning segment; that stretch reads IWILLGLAWLALILPLGPLLL. The Cytoplasmic portion of the chain corresponds to 259 to 309; it reads HRCCQLWLLSLRQGCGAKAAPGRRPRRGSTAARGVQVTPQDFPISKKGLGS.

Belongs to the two pore domain potassium channel (TC 1.A.1.8) family. Homodimer; disulfide-linked. Heterodimer with KCNK17 and KCNK5. Highly expressed in pancreas, in both endocrine (alpha, beta, gamma, delta, and epsilon) and exocrine (acinar and ductal) cells. Expressed in pacreatic beta-cells (at protein level). Expressed in pacreatic delta-cells (at protein level). Not detectable in the other tissues tested.

The protein resides in the endoplasmic reticulum membrane. Its subcellular location is the cell membrane. It is found in the mitochondrion inner membrane. It carries out the reaction K(+)(in) = K(+)(out). The catalysed reaction is Rb(+)(in) = Rb(+)(out). It catalyses the reaction Cs(+)(in) = Cs(+)(out). The channel conductance is stimulated by extracellular alkaline pH. Inhibited by Ba(2+) ions, quinine, quinidine, chloroform and halothane. Its function is as follows. K(+) channel that conducts voltage-dependent outward rectifying currents upon membrane depolarization. Voltage sensing is coupled to K(+) electrochemical gradient in an 'ion flux gating' mode where outward but not inward ion flow opens the gate. Homo- and heterodimerizes to form functional channels with distinct regulatory and gating properties. In pancreatic islets, conducts K(+) countercurrents for Ca(2+) release from the endoplasmic reticulum (ER) and regulates the frequency and duration of cytosolic Ca(2+) oscillations coupled to secretion of pancreatic hormones. In pancreatic beta cells, drives ER Ca(2+) efflux, which in turn activates Ca(2+)-dependent plasma membrane K(+) slow currents and cytosolic Ca(2+) influx, overall contributing to synchronous cytosolic Ca(2+) oscillations. Limits glucose-induced cytosolic Ca(2+) oscillations coupled to second-phase INS secretion. Contributes to beta cell adaptation to acute inflammation by maintaining normal cytosolic Ca(2+) levels and INS secretion. May regulate beta cell mitochondrial Ca(2+) levels either indirectly via ER Ca(2+) efflux or directly by hyperpolarizing the mitochondrial membrane potential. Limits mitochondrial Ca(2+) oscillations and ATP production involved in glucose homeostasis upon metabolic stress. In pancreatic delta cells, limits Ca(2+)-induced Ca(2+)-release involved in somatostatin secretion and modulates islet paracrine signaling involved in glucagon secretion. Permeable to other monovalent cations such as Rb(+) and Cs(+). The polypeptide is Potassium channel subfamily K member 16 (Homo sapiens (Human)).